We begin with the raw amino-acid sequence, 182 residues long: Large ribosomal subunit protein uL5 (182 aa).

It belongs to the universal ribosomal protein uL5 family. As to quaternary structure, part of the 50S ribosomal subunit; part of the 5S rRNA/L5/L18/L25 subcomplex. Contacts the 5S rRNA and the P site tRNA. Forms a bridge to the 30S subunit in the 70S ribosome.

Functionally, this is one of the proteins that bind and probably mediate the attachment of the 5S RNA into the large ribosomal subunit, where it forms part of the central protuberance. In the 70S ribosome it contacts protein S13 of the 30S subunit (bridge B1b), connecting the 2 subunits; this bridge is implicated in subunit movement. Contacts the P site tRNA; the 5S rRNA and some of its associated proteins might help stabilize positioning of ribosome-bound tRNAs. The protein is Large ribosomal subunit protein uL5 of Borrelia hermsii (strain HS1 / DAH).